The primary structure comprises 277 residues: Bifunctional protein FolD (277 aa).

NADP(+) contacts are provided by residues 156 to 158 (GRS), Ser-183, and Ile-224.

The protein belongs to the tetrahydrofolate dehydrogenase/cyclohydrolase family. Homodimer.

The catalysed reaction is (6R)-5,10-methylene-5,6,7,8-tetrahydrofolate + NADP(+) = (6R)-5,10-methenyltetrahydrofolate + NADPH. The enzyme catalyses (6R)-5,10-methenyltetrahydrofolate + H2O = (6R)-10-formyltetrahydrofolate + H(+). It participates in one-carbon metabolism; tetrahydrofolate interconversion. In terms of biological role, catalyzes the oxidation of 5,10-methylenetetrahydrofolate to 5,10-methenyltetrahydrofolate and then the hydrolysis of 5,10-methenyltetrahydrofolate to 10-formyltetrahydrofolate. This Kosmotoga olearia (strain ATCC BAA-1733 / DSM 21960 / TBF 19.5.1) protein is Bifunctional protein FolD.